Reading from the N-terminus, the 147-residue chain is Large ribosomal subunit protein bL9 (147 aa).

This sequence belongs to the bacterial ribosomal protein bL9 family.

Functionally, binds to the 23S rRNA. This chain is Large ribosomal subunit protein bL9, found in Campylobacter jejuni subsp. doylei (strain ATCC BAA-1458 / RM4099 / 269.97).